The following is a 179-amino-acid chain: Large ribosomal subunit protein uL5 (179 aa).

It belongs to the universal ribosomal protein uL5 family. As to quaternary structure, part of the 50S ribosomal subunit; part of the 5S rRNA/L5/L18/L25 subcomplex. Contacts the 5S rRNA and the P site tRNA. Forms a bridge to the 30S subunit in the 70S ribosome.

Functionally, this is one of the proteins that bind and probably mediate the attachment of the 5S RNA into the large ribosomal subunit, where it forms part of the central protuberance. In the 70S ribosome it contacts protein S13 of the 30S subunit (bridge B1b), connecting the 2 subunits; this bridge is implicated in subunit movement. Contacts the P site tRNA; the 5S rRNA and some of its associated proteins might help stabilize positioning of ribosome-bound tRNAs. This is Large ribosomal subunit protein uL5 from Idiomarina loihiensis (strain ATCC BAA-735 / DSM 15497 / L2-TR).